We begin with the raw amino-acid sequence, 228 residues long: Cell surface Cu-only superoxide dismutase 5 (228 aa).

The first 15 residues, 1–15 (MKYLSIFLLATFALA), serve as a signal peptide directing secretion. Asn-53 carries an N-linked (GlcNAc...) asparagine glycan. The Cu cation site is built by His-75 and His-77. Asn-86 carries an N-linked (GlcNAc...) asparagine glycan. Cys-87 and Cys-162 are joined by a disulfide. A Cu cation-binding site is contributed by His-93. Asn-98 carries N-linked (GlcNAc...) asparagine glycosylation. His-153 contributes to the Cu cation binding site. Asn-156, Asn-164, Asn-176, Asn-181, and Asn-192 each carry an N-linked (GlcNAc...) asparagine glycan. Low complexity predominate over residues 176–201 (NTTMSNSSSSSSQSAVNTSSSMASTA). Residues 176–204 (NTTMSNSSSSSSQSAVNTSSSMASTAPQG) are disordered. The GPI-anchor amidated asparagine moiety is linked to residue Asn-205. A propeptide spans 206–228 (GAERAVVNGLLAAGVVGVIAALI) (removed in mature form).

This sequence belongs to the Cu-Zn superoxide dismutase family. In terms of assembly, monomer. The cofactor is Cu cation. Post-translationally, the GPI-anchor is attached to the protein in the endoplasmic reticulum and serves to target the protein to the cell surface. There, the glucosamine-inositol phospholipid moiety is cleaved off and the GPI-modified mannoprotein is covalently attached via its lipidless GPI glycan remnant to the 1,6-beta-glucan of the outer cell wall layer.

It is found in the secreted. The protein resides in the cell wall. It localises to the membrane. It carries out the reaction 2 superoxide + 2 H(+) = H2O2 + O2. With respect to regulation, secreted in a disulfide-oxidized form and apo-pools of secreted SOD5 can readily capture extracellular copper for rapid induction of enzyme activity. Its function is as follows. Superoxide dismutases serve to convert damaging superoxide radicals, a key form of ROS, to less damaging hydrogen peroxide that can be converted into water by catalase action. Degrades host-derived reactive oxygen species to escape innate immune surveillance. Involved in the occurrence of miconazole-tolerant persisters in biofilms. Persisters are cells that survive high doses of an antimicrobial agent. The unusual attributes of SOD5-like fungal proteins, including the absence of zinc and an open active site that readily captures extracellular copper, make these SODs well suited to meet challenges in zinc and copper availability at the host-pathogen interface. This is Cell surface Cu-only superoxide dismutase 5 (SOD5) from Candida albicans (strain SC5314 / ATCC MYA-2876) (Yeast).